We begin with the raw amino-acid sequence, 224 residues long: Peroxiredoxin-6 (224 aa).

One can recognise a Thioredoxin domain in the interval 5–169; the sequence is LLLGDEAPNF…ILRVIISLQL (165 aa). The required and sufficient for targeting to lysosomes and lamellar bodies stretch occupies residues 31–40; it reads DSWGILFSHP. A Phosphothreonine modification is found at threonine 44. Cysteine 47 functions as the Cysteine sulfenic acid (-SOH) intermediate; for peroxidase activity in the catalytic mechanism. Lysine 63 is subject to N6-acetyllysine. The residue at position 89 (tyrosine 89) is a Phosphotyrosine. Catalysis depends on aspartate 140, which acts as the For phospholipase activity. Threonine 177 is modified (phosphothreonine; by MAPK). An N6-acetyllysine; alternate modification is found at lysine 209. The residue at position 209 (lysine 209) is an N6-succinyllysine; alternate.

The protein belongs to the peroxiredoxin family. Prx6 subfamily. Homodimer. Interacts with GSTP1; mediates PRDX6 glutathionylation and regeneration. Interacts with APEX1. Interacts with STH. May interact with FAM168B. May interact with HTR2A. Irreversibly inactivated by overoxidation of Cys-47 to sulfinic acid (Cys-SO(2)H) and sulfonic acid (Cys-SO(3)H) forms upon oxidative stress. Post-translationally, phosphorylation at Thr-177 by MAP kinases increases the phospholipase activity of the enzyme. The phosphorylated form exhibits a greater lysophosphatidylcholine acyltransferase activity compared to the non-phosphorylated form.

The protein resides in the cytoplasm. The protein localises to the lysosome. The enzyme catalyses a hydroperoxide + 2 glutathione = an alcohol + glutathione disulfide + H2O. It catalyses the reaction a 1,2-diacyl-sn-glycero-3-phosphocholine + H2O = a 1-acyl-sn-glycero-3-phosphocholine + a fatty acid + H(+). The catalysed reaction is a 1-acyl-sn-glycero-3-phosphocholine + an acyl-CoA = a 1,2-diacyl-sn-glycero-3-phosphocholine + CoA. It carries out the reaction 1-hexadecanoyl-sn-glycero-3-phosphocholine + hexadecanoyl-CoA = 1,2-dihexadecanoyl-sn-glycero-3-phosphocholine + CoA. The enzyme catalyses 1,2-dihexadecanoyl-sn-glycero-3-phosphocholine + H2O = 1-hexadecanoyl-sn-glycero-3-phosphocholine + hexadecanoate + H(+). Functionally, thiol-specific peroxidase that catalyzes the reduction of hydrogen peroxide and organic hydroperoxides to water and alcohols, respectively. Can reduce H(2)O(2) and short chain organic, fatty acid, and phospholipid hydroperoxides. Also has phospholipase activity, and can therefore either reduce the oxidized sn-2 fatty acyl group of phospholipids (peroxidase activity) or hydrolyze the sn-2 ester bond of phospholipids (phospholipase activity). These activities are dependent on binding to phospholipids at acidic pH and to oxidized phospholipds at cytosolic pH. Plays a role in cell protection against oxidative stress by detoxifying peroxides and in phospholipid homeostasis. Exhibits acyl-CoA-dependent lysophospholipid acyltransferase which mediates the conversion of lysophosphatidylcholine (1-acyl-sn-glycero-3-phosphocholine or LPC) into phosphatidylcholine (1,2-diacyl-sn-glycero-3-phosphocholine or PC). Shows a clear preference for LPC as the lysophospholipid and for palmitoyl CoA as the fatty acyl substrate. This Sus scrofa (Pig) protein is Peroxiredoxin-6 (PRDX6).